Reading from the N-terminus, the 253-residue chain is MTISSFQKQLTTQITNFLARKTISDSSKQAYAYDLKQFVNCLPGRVDQTSLKLYENQLKEWKPSVQKRKRSAVNQFLLYLYQKGELEEFFKLSETAPLPSQQEELEIFDLSSLYEGQEGPGKLACLFILELGLLPSEILELKWEDIDLDFGVVTVAKGSTKRVLRLDGALKELLFGIKNDNSQGLILSKAFTRQWLYKQIQSYVGGCGLSGVTAQALRQQYILRQIEKGTGAFELARLLGLKSPVTLEKYYKT.

The 74-residue stretch at 8 to 81 folds into the Core-binding (CB) domain; that stretch reads KQLTTQITNF…AVNQFLLYLY (74 aa). Residues 93–253 enclose the Tyr recombinase domain; it reads SETAPLPSQQ…PVTLEKYYKT (161 aa). Residues Lys-157 and Arg-218 contribute to the active site. The active-site O-(3'-phospho-DNA)-tyrosine intermediate is the Tyr-250.

This sequence belongs to the 'phage' integrase family. XerD-like subfamily.

The protein localises to the cytoplasm. Its function is as follows. Putative tyrosine recombinase. Not involved in the cutting and rejoining of the recombining DNA molecules on dif(SL) site. In Streptococcus thermophilus (strain CNRZ 1066), this protein is Tyrosine recombinase XerD-like.